The chain runs to 51 residues: uncharacterized protein (51 aa).

The protein to E.coli YdfA.

This is an uncharacterized protein from Escherichia coli O157:H7.